Consider the following 66-residue polypeptide: Putative alpha-neurotoxin RjAa44 (66 aa).

Residues 1 to 60 (KEGYPVDWGNCKYECMSDAYCKDLCADRKAKSGYCYKLNWSCYCEGLPDDSPIKTNGHCR) form the LCN-type CS-alpha/beta domain. Disulfide bonds link cysteine 11–cysteine 59, cysteine 15–cysteine 35, cysteine 21–cysteine 42, and cysteine 25–cysteine 44.

This sequence belongs to the long (4 C-C) scorpion toxin superfamily. Sodium channel inhibitor family. Alpha subfamily. In terms of tissue distribution, expressed by the venom gland.

The protein localises to the secreted. Alpha toxins bind voltage-independently at site-3 of sodium channels (Nav) and inhibit the inactivation of the activated channels, thereby blocking neuronal transmission. The chain is Putative alpha-neurotoxin RjAa44 from Rhopalurus junceus (Caribbean blue scorpion).